Reading from the N-terminus, the 418-residue chain is ATP-dependent RNA helicase RhlB (418 aa).

Positions 9–37 (TKFADLPLEKSLISGLTSQGYEYCTPIQA) match the Q motif motif. Residues 40–219 (LPITLTGKDI…FEHMNDPESI (180 aa)) enclose the Helicase ATP-binding domain. 53–60 (AQTGTGKT) is a binding site for ATP. A DEAD box motif is present at residues 165–168 (DEAD). The Helicase C-terminal domain occupies 243–390 (KILLLLSLIE…CSEYDKNAML (148 aa)).

It belongs to the DEAD box helicase family. RhlB subfamily. In terms of assembly, component of the RNA degradosome, which is a multiprotein complex involved in RNA processing and mRNA degradation.

It localises to the cytoplasm. The catalysed reaction is ATP + H2O = ADP + phosphate + H(+). DEAD-box RNA helicase involved in RNA degradation. Has RNA-dependent ATPase activity and unwinds double-stranded RNA. In Psychromonas ingrahamii (strain DSM 17664 / CCUG 51855 / 37), this protein is ATP-dependent RNA helicase RhlB.